The sequence spans 143 residues: Large ribosomal subunit protein uL15 (143 aa).

The segment at Met1 to Arg59 is disordered. Gly residues predominate over residues Arg21–Ala31.

This sequence belongs to the universal ribosomal protein uL15 family. As to quaternary structure, part of the 50S ribosomal subunit.

Binds to the 23S rRNA. The protein is Large ribosomal subunit protein uL15 of Albidiferax ferrireducens (strain ATCC BAA-621 / DSM 15236 / T118) (Rhodoferax ferrireducens).